Here is a 475-residue protein sequence, read N- to C-terminus: 3-isopropylmalate dehydratase large subunit 1 (475 aa).

3 residues coordinate [4Fe-4S] cluster: cysteine 353, cysteine 413, and cysteine 416.

This sequence belongs to the aconitase/IPM isomerase family. LeuC type 1 subfamily. As to quaternary structure, heterodimer of LeuC and LeuD. [4Fe-4S] cluster is required as a cofactor.

It catalyses the reaction (2R,3S)-3-isopropylmalate = (2S)-2-isopropylmalate. It functions in the pathway amino-acid biosynthesis; L-leucine biosynthesis; L-leucine from 3-methyl-2-oxobutanoate: step 2/4. Its function is as follows. Catalyzes the isomerization between 2-isopropylmalate and 3-isopropylmalate, via the formation of 2-isopropylmaleate. This chain is 3-isopropylmalate dehydratase large subunit 1, found in Mannheimia succiniciproducens (strain KCTC 0769BP / MBEL55E).